A 706-amino-acid polypeptide reads, in one-letter code: Signal transducer and activator of transcription 1 (706 aa).

Residues 477–574 (WCIGFISKND…EEMLRFFESE (98 aa)) form the SH2 domain.

The protein belongs to the transcription factor STAT family. In terms of assembly, forms a homodimer or a heterodimer with a related family member. As to expression, expressed in adult and larval pharynx, head ganglia, tail ganglia, ventral nerve cord and body muscles.

The protein localises to the cytoplasm. It is found in the nucleus. In terms of biological role, carries out a dual function: signal transduction and activation of transcription. Activated STAT proteins play a role in repression of dauer formation. Neuronal expression is held in check by negative signals through the TGF-beta pathway that target the daf-3 transcription factor. The polypeptide is Signal transducer and activator of transcription 1 (Caenorhabditis elegans).